Consider the following 207-residue polypeptide: Claudin-11 (207 aa).

A topological domain (cytoplasmic) is located at residue methionine 1. Residues 2 to 22 (VATCLQVVGFVTSFVGWIGVI) traverse the membrane as a helical segment. At 23 to 82 (VTTSTNDWVVTCGYTIPTCRKLDELGSKGLWADCVMATGLYHCKPLVDILILPGYVQACR) the chain is on the extracellular side. A helical membrane pass occupies residues 83–103 (ALMIAASVLGLPAILLLLTVL). At 104 to 122 (PCIRMGHEPGVAKYRRAQL) the chain is on the cytoplasmic side. Residues 123 to 143 (AGVLLILLALCAIVATIWFPV) traverse the membrane as a helical segment. The Extracellular portion of the chain corresponds to 144–157 (CAHRETTIVSFGYS). Residues 158–178 (LYAGWIGAVLCLVGGCVILCC) traverse the membrane as a helical segment. At 179–207 (AGDAQAFGENRFYYSSGSSSPTHAKSAHV) the chain is on the cytoplasmic side. Serine 193, serine 194, serine 197, and serine 198 each carry phosphoserine.

It belongs to the claudin family. As to quaternary structure, interacts with tetraspanin-3/TSPAN3. Interacts with OCLN.

The protein resides in the cell junction. It is found in the tight junction. The protein localises to the cell membrane. Its function is as follows. Plays a major role in tight junction-specific obliteration of the intercellular space, through calcium-independent cell-adhesion activity. The protein is Claudin-11 (CLDN11) of Macaca fascicularis (Crab-eating macaque).